The following is a 93-amino-acid chain: Large ribosomal subunit protein bL27 (93 aa).

Belongs to the bacterial ribosomal protein bL27 family.

The protein is Large ribosomal subunit protein bL27 of Trichormus variabilis (strain ATCC 29413 / PCC 7937) (Anabaena variabilis).